A 76-amino-acid polypeptide reads, in one-letter code: ATP synthase subunit c (76 aa).

2 consecutive transmembrane segments (helical) span residues 5–25 (GIIAIAAAIAAFTGIGAGIGI) and 54–74 (AALAEATAIYGLVVALVLVFL).

Belongs to the ATPase C chain family. F-type ATPases have 2 components, F(1) - the catalytic core - and F(0) - the membrane proton channel. F(1) has five subunits: alpha(3), beta(3), gamma(1), delta(1), epsilon(1). F(0) has three main subunits: a(1), b(2) and c(10-14). The alpha and beta chains form an alternating ring which encloses part of the gamma chain. F(1) is attached to F(0) by a central stalk formed by the gamma and epsilon chains, while a peripheral stalk is formed by the delta and b chains.

The protein resides in the cell membrane. Functionally, f(1)F(0) ATP synthase produces ATP from ADP in the presence of a proton or sodium gradient. F-type ATPases consist of two structural domains, F(1) containing the extramembraneous catalytic core and F(0) containing the membrane proton channel, linked together by a central stalk and a peripheral stalk. During catalysis, ATP synthesis in the catalytic domain of F(1) is coupled via a rotary mechanism of the central stalk subunits to proton translocation. Its function is as follows. Key component of the F(0) channel; it plays a direct role in translocation across the membrane. A homomeric c-ring of between 10-14 subunits forms the central stalk rotor element with the F(1) delta and epsilon subunits. The sequence is that of ATP synthase subunit c from Ruminiclostridium cellulolyticum (strain ATCC 35319 / DSM 5812 / JCM 6584 / H10) (Clostridium cellulolyticum).